Here is an 894-residue protein sequence, read N- to C-terminus: Tyrosine-protein kinase receptor UFO (894 aa).

An N-terminal signal peptide occupies residues 1 to 25; that stretch reads MAWRCPRMGRVPLAWCLALCGWACM. The interval 26 to 92 is interaction with GAS6; that stretch reads APRGTQAEES…QTQVPLGEDE (67 aa). At 26-451 the chain is on the extracellular side; the sequence is APRGTQAEES…STPAFSWPWW (426 aa). 2 Ig-like C2-type domains span residues 27-128 and 139-222; these read PRGT…TFVS and PYFL…ATIT. N-linked (GlcNAc...) asparagine glycosylation occurs at Asn-43. Residues Cys-56 and Cys-117 are joined by a disulfide bond. N-linked (GlcNAc...) asparagine glycans are attached at residues Asn-157 and Asn-198. A disulfide bond links Cys-160 and Cys-205. Fibronectin type-III domains are found at residues 227–331 and 336–428; these read QPRN…TPEG and PPEN…AWRP. 3 N-linked (GlcNAc...) asparagine glycosylation sites follow: Asn-339, Asn-345, and Asn-401. Residues 452–472 traverse the membrane as a helical segment; sequence YVLLGAVVAAACVLILALFLV. The Cytoplasmic portion of the chain corresponds to 473–894; the sequence is HRRKKETRYG…PAAPGQEDGA (422 aa). Residues 536–807 enclose the Protein kinase domain; it reads VALGKTLGEG…ELREDLENTL (272 aa). ATP contacts are provided by residues 542–550 and Lys-567; that span reads LGEGEFGAV. Asp-672 serves as the catalytic Proton acceptor. 3 positions are modified to phosphotyrosine; by autocatalysis: Tyr-703, Tyr-779, and Tyr-821. Disordered stretches follow at residues 823 to 853 and 866 to 894; these read NMDE…DSCS and YVLC…EDGA. Position 866 is a phosphotyrosine; by autocatalysis (Tyr-866). At Ser-884 the chain carries Phosphoserine.

The protein belongs to the protein kinase superfamily. Tyr protein kinase family. AXL/UFO subfamily. As to quaternary structure, heterodimer and heterotetramer with ligand GAS6. Interacts with CBL, GRB2, LCK, NCK2, PIK3R1, PIK3R2, PIK3R3, PLCG1, SOCS1 and TNS2. Part of a complex including AXL, TNK2 and GRB2, in which GRB2 promotes AXL recruitment by TNK2. In terms of processing, monoubiquitinated upon GAS6-binding. A very small proportion of the receptor could be subjected to polyubiquitination in a very transient fashion. Phosphorylated at tyrosine residues by autocatalysis, which activates kinase activity. Highly expressed in metastatic colon tumors. Expressed in primary colon tumors. Weakly expressed in normal colon tissue.

The protein localises to the cell membrane. It carries out the reaction L-tyrosyl-[protein] + ATP = O-phospho-L-tyrosyl-[protein] + ADP + H(+). With respect to regulation, activated by GAS6-binding and subsequent autophosphorylation. Its function is as follows. Receptor tyrosine kinase that transduces signals from the extracellular matrix into the cytoplasm by binding growth factor GAS6 and which is thus regulating many physiological processes including cell survival, cell proliferation, migration and differentiation. Ligand binding at the cell surface induces dimerization and autophosphorylation of AXL. Following activation by ligand, AXL binds and induces tyrosine phosphorylation of PI3-kinase subunits PIK3R1, PIK3R2 and PIK3R3; but also GRB2, PLCG1, LCK and PTPN11. Other downstream substrate candidates for AXL are CBL, NCK2, SOCS1 and TNS2. Recruitment of GRB2 and phosphatidylinositol 3 kinase regulatory subunits by AXL leads to the downstream activation of the AKT kinase. GAS6/AXL signaling plays a role in various processes such as endothelial cell survival during acidification by preventing apoptosis, optimal cytokine signaling during human natural killer cell development, hepatic regeneration, gonadotropin-releasing hormone neuron survival and migration, platelet activation, or regulation of thrombotic responses. Also plays an important role in inhibition of Toll-like receptors (TLRs)-mediated innate immune response. In terms of biological role, (Microbial infection) Acts as a receptor for lassa virus and lymphocytic choriomeningitis virus, possibly through GAS6 binding to phosphatidyl-serine at the surface of virion envelope. Functionally, (Microbial infection) Acts as a receptor for Ebolavirus, possibly through GAS6 binding to phosphatidyl-serine at the surface of virion envelope. (Microbial infection) Promotes Zika virus entry in glial cells, Sertoli cells and astrocytes. Additionally, Zika virus potentiates AXL kinase activity to antagonize type I interferon signaling and thereby promotes infection. Interferon signaling inhibition occurs via an SOCS1-dependent mechanism. The sequence is that of Tyrosine-protein kinase receptor UFO (AXL) from Homo sapiens (Human).